A 341-amino-acid chain; its full sequence is UDP-3-O-acylglucosamine N-acyltransferase (341 aa).

The active-site Proton acceptor is His239.

The protein belongs to the transferase hexapeptide repeat family. LpxD subfamily. As to quaternary structure, homotrimer.

It catalyses the reaction a UDP-3-O-[(3R)-3-hydroxyacyl]-alpha-D-glucosamine + a (3R)-hydroxyacyl-[ACP] = a UDP-2-N,3-O-bis[(3R)-3-hydroxyacyl]-alpha-D-glucosamine + holo-[ACP] + H(+). It participates in bacterial outer membrane biogenesis; LPS lipid A biosynthesis. Catalyzes the N-acylation of UDP-3-O-acylglucosamine using 3-hydroxyacyl-ACP as the acyl donor. Is involved in the biosynthesis of lipid A, a phosphorylated glycolipid that anchors the lipopolysaccharide to the outer membrane of the cell. The protein is UDP-3-O-acylglucosamine N-acyltransferase of Shewanella oneidensis (strain ATCC 700550 / JCM 31522 / CIP 106686 / LMG 19005 / NCIMB 14063 / MR-1).